Reading from the N-terminus, the 218-residue chain is Acetyl- and succinyl-CoA transferase MT0822 (218 aa).

Positions 32 to 188 (DTILEGVHDP…EALLFRLTRD (157 aa)) constitute an N-acetyltransferase domain. Residues Q94, 109-113 (SGSWL), 119-124 (GHGYGT), 145-151 (SRSFVDN), and R160 contribute to the substrate site.

As to quaternary structure, dimer of dimers.

It carries out the reaction L-lysyl-[protein] + acetyl-CoA = N(6)-acetyl-L-lysyl-[protein] + CoA + H(+). The catalysed reaction is succinyl-CoA + L-lysyl-[protein] = N(6)-succinyl-L-lysyl-[protein] + CoA + H(+). Functionally, acetylates and succinylates nucleoid-associated, DNA-binding protein HupB. The sequence is that of Acetyl- and succinyl-CoA transferase MT0822 from Mycobacterium tuberculosis (strain CDC 1551 / Oshkosh).